The following is a 376-amino-acid chain: Glutamate 5-kinase (376 aa).

K17 contacts ATP. Positions 57, 144, and 156 each coordinate substrate. 176–177 (TD) is an ATP binding site. A PUA domain is found at 283–361 (KGQLVLDEGA…SEINQLLGYS (79 aa)).

It belongs to the glutamate 5-kinase family.

It is found in the cytoplasm. It catalyses the reaction L-glutamate + ATP = L-glutamyl 5-phosphate + ADP. The protein operates within amino-acid biosynthesis; L-proline biosynthesis; L-glutamate 5-semialdehyde from L-glutamate: step 1/2. Its function is as follows. Catalyzes the transfer of a phosphate group to glutamate to form L-glutamate 5-phosphate. The polypeptide is Glutamate 5-kinase (Hydrogenovibrio crunogenus (strain DSM 25203 / XCL-2) (Thiomicrospira crunogena)).